Here is a 334-residue protein sequence, read N- to C-terminus: Cathepsin J (334 aa).

The signal sequence occupies residues methionine 1 to glycine 17. Positions alanine 18 to glycine 113 are cleaved as a propeptide — activation peptide. Asparagine 72 is a glycosylation site (N-linked (GlcNAc...) asparagine). 2 disulfides stabilise this stretch: cysteine 135–cysteine 178 and cysteine 169–cysteine 211. Cysteine 138 is an active-site residue. N-linked (GlcNAc...) asparagine glycosylation is found at asparagine 217, asparagine 221, and asparagine 268. Cysteine 269 and cysteine 322 are oxidised to a cystine. Residues histidine 276 and asparagine 300 contribute to the active site.

It belongs to the peptidase C1 family. Expressed specifically in placenta.

The protein localises to the lysosome. The sequence is that of Cathepsin J (Ctsj) from Mus musculus (Mouse).